A 427-amino-acid chain; its full sequence is UDP-N-acetylglucosamine 1-carboxyvinyltransferase 2 (427 aa).

19–20 (KN) contributes to the phosphoenolpyruvate binding site. A UDP-N-acetyl-alpha-D-glucosamine-binding site is contributed by arginine 91. Cysteine 115 acts as the Proton donor in catalysis. Cysteine 115 carries the 2-(S-cysteinyl)pyruvic acid O-phosphothioketal modification. UDP-N-acetyl-alpha-D-glucosamine is bound by residues aspartate 307 and valine 329.

The protein belongs to the EPSP synthase family. MurA subfamily.

The protein resides in the cytoplasm. It carries out the reaction phosphoenolpyruvate + UDP-N-acetyl-alpha-D-glucosamine = UDP-N-acetyl-3-O-(1-carboxyvinyl)-alpha-D-glucosamine + phosphate. The protein operates within cell wall biogenesis; peptidoglycan biosynthesis. Functionally, cell wall formation. Adds enolpyruvyl to UDP-N-acetylglucosamine. This Prochlorococcus marinus (strain SARG / CCMP1375 / SS120) protein is UDP-N-acetylglucosamine 1-carboxyvinyltransferase 2.